Here is a 373-residue protein sequence, read N- to C-terminus: Citrate synthase (373 aa).

Active-site residues include histidine 262 and aspartate 314.

Belongs to the citrate synthase family. Homohexamer.

The enzyme catalyses oxaloacetate + acetyl-CoA + H2O = citrate + CoA + H(+). It functions in the pathway carbohydrate metabolism; tricarboxylic acid cycle; isocitrate from oxaloacetate: step 1/2. In Heyndrickxia coagulans (Weizmannia coagulans), this protein is Citrate synthase (ctsA).